The chain runs to 61 residues: Large ribosomal subunit protein bL32 (61 aa).

The segment at 1-44 (MAVQQNRKSRSRRDMRRSHDALTENALTVDQTTGETHRRHHVTK) is disordered. Positions 7 to 16 (RKSRSRRDMR) are enriched in basic residues. Polar residues predominate over residues 25–34 (NALTVDQTTG).

It belongs to the bacterial ribosomal protein bL32 family.

The chain is Large ribosomal subunit protein bL32 from Acinetobacter baylyi (strain ATCC 33305 / BD413 / ADP1).